Here is a 360-residue protein sequence, read N- to C-terminus: MKFGPNTTQIYIPLDLQINILLRLPVKSLLRFRCVSKLWCSIITSHDFRNRHFNITSSSAPPRLLIAFQDFYGEKLLLVSSPNPNVSSSSTSSCCVPYKDLSKVEINGRKVYNAVWGLTCFESRLKVGICNPSTRELHMFPQIKFKNYPDIFPCIMYFLGYDRIEDQYKVLAIDNLPWRLEYKVVPILRASRKDKGSPNISIIVSFDVRSETYKNSNVPSKLLPMDTSDNFWTANCNCFIGDKTLINYNGKIGVVEKPQHGRFRMWVVEDAEKEEWSMNTFYLPQSASGLDFKVMNTFYTGEICLVTEKISDPFCLFYYNLKTNSMRSVTYEGLLHMATFKQALQFSVSYHYESLVSLET.

Residues Asn6–Thr56 enclose the F-box domain.

The sequence is that of Putative F-box protein At3g47150 from Arabidopsis thaliana (Mouse-ear cress).